A 403-amino-acid polypeptide reads, in one-letter code: G-protein coupled receptor family C group 5 member B (403 aa).

The first 28 residues, 1–28, serve as a signal peptide directing secretion; that stretch reads MFVASERKMRAHQVLTFLLLFVITSVAS. Over 29–56 the chain is Extracellular; that stretch reads ENASTSRGCGLDLLPQYVSLCDLDAIWG. The N-linked (GlcNAc...) asparagine glycan is linked to Asn-30. A helical transmembrane segment spans residues 57–77; the sequence is IVVEAVAGAGALITLLLMLIL. Residues 78-94 are Cytoplasmic-facing; that stretch reads LVRLPFIKEKEKKSPVG. A helical membrane pass occupies residues 95–115; sequence LHFLFLLGTLGLFGLTFAFII. Residues 116–126 are Extracellular-facing; that stretch reads QEDETICSVRR. The chain crosses the membrane as a helical span at residues 127–147; sequence FLWGVLFALCFSCLLSQAWRV. The Cytoplasmic portion of the chain corresponds to 148 to 162; the sequence is RRLVRHGTGPAGWQL. A helical transmembrane segment spans residues 163–183; the sequence is VGLALCLMLVQVIIAVEWLVL. Residues 184–199 lie on the Extracellular side of the membrane; it reads TVLRDTRPACAYEPMD. A helical membrane pass occupies residues 200 to 220; the sequence is FVMALIYDMVLLVVTLGLALF. Topologically, residues 221 to 234 are cytoplasmic; that stretch reads TLCGKFKRWKLNGA. The chain crosses the membrane as a helical span at residues 235–255; that stretch reads FLLITAFLSVLIWVAWMTMYL. Residues 256 to 271 lie on the Extracellular side of the membrane; it reads FGNVKLQQGDAWNDPT. The helical transmembrane segment at 272–292 threads the bilayer; the sequence is LAITLAASGWVFVIFHAIPEI. Over 293–403 the chain is Cytoplasmic; it reads HCTLLPALQE…PPSHTGRHLW (111 aa). Residues 349 to 371 are disordered; that stretch reads GFPNGSLGKRPSGSLGKRPSAPF. Phosphoserine is present on Ser-354.

It belongs to the G-protein coupled receptor 3 family. In terms of tissue distribution, expression is high in kidney, pancreas, and testis, medium in brain, heart, prostate, small intestine, and spleen, low in liver, placenta, skeletal muscle, colon, ovary, and thymus, and not detectable in lung and peripheral leukocyte. According to PubMed:10945465, highly expressed in most brain areas examined, with the highest levels observed in corpus callosum, caudate nucleus, putamen, substantia nigra, thalamus, hippocampus, and spinal cord as well as in dorsal root ganglia (DRG). Expressed in glia limitans, ependymal cells, astrocyte cell bodies, the perivascular region in astrocyte endfeet, but not in neurons. In the periphery, expression levels are relatively low, compared to the CNS, with the strongest expression detected in pancreas, testis, uterus, and stomach.

The protein resides in the cell membrane. Its subcellular location is the cytoplasmic vesicle membrane. Its function is as follows. G-protein coupled receptor involved in the regulation of cell volume. The protein is G-protein coupled receptor family C group 5 member B (GPRC5B) of Homo sapiens (Human).